A 603-amino-acid polypeptide reads, in one-letter code: Beta-glucuronidase (603 aa).

The D-glucuronate site is built by D163 and N412. E413 serves as the catalytic Proton donor. Positions 466, 472, 504, 549, and 568 each coordinate D-glucuronate. Residue E504 is the Nucleophile of the active site. The N-K motif motif lies at 566–568; that stretch reads NKK.

The protein belongs to the glycosyl hydrolase 2 family. As to quaternary structure, homotetramer.

It carries out the reaction a beta-D-glucuronoside + H2O = D-glucuronate + an alcohol. It catalyses the reaction 4-methylumbelliferone beta-D-glucuronate + H2O = 4-methylumbelliferone + D-glucuronate. Its activity is regulated as follows. Potently inhibited by a set of synthetic compounds like thio-urea derivatives and analogs, and uronic isofagomine (UIFG) derivatives. Inhibitors of gut microbial beta-glucuronidases block the reactivation of glucuronidated cancer drugs, and thereby alleviate drug-induced GI toxicity. Functionally, displays beta-glucuronidase activity with the artificial substrate p-nitrophenyl-beta-D-glucuronide (PNPG) and with 4-methylumbelliferyl-glucuronide. Is likely capable of scavenging glucuronate from a range of chemically distinct xenobiotic and endobiotic glucuronides present in the gastrointestinal (GI) tract, to be able to utilize these diverse sources of carbon. As part of the GI microbiome, this enzyme is able to reactivate glucuronide drug conjugates, such reactivated compounds can significantly damage the GI tract. The protein is Beta-glucuronidase (uidA) of Escherichia coli (strain K12).